Consider the following 339-residue polypeptide: DNA-directed RNA polymerase subunit alpha (339 aa).

The segment at methionine 1–glutamate 235 is alpha N-terminal domain (alpha-NTD). The tract at residues phenylalanine 251–tyrosine 339 is alpha C-terminal domain (alpha-CTD).

It belongs to the RNA polymerase alpha chain family. Homodimer. The RNAP catalytic core consists of 2 alpha, 1 beta, 1 beta' and 1 omega subunit. When a sigma factor is associated with the core the holoenzyme is formed, which can initiate transcription.

The enzyme catalyses RNA(n) + a ribonucleoside 5'-triphosphate = RNA(n+1) + diphosphate. Its function is as follows. DNA-dependent RNA polymerase catalyzes the transcription of DNA into RNA using the four ribonucleoside triphosphates as substrates. In Rhodopseudomonas palustris (strain ATCC BAA-98 / CGA009), this protein is DNA-directed RNA polymerase subunit alpha.